Consider the following 28-residue polypeptide: Alkaline serine protease NJP (28 aa).

Its activity is regulated as follows. Inhibited by PMSF. Not or very weakly inhibited by EDTA, EGTA, beta-mercaptoethanol, benzamidine, aprotinin, iodoacetic acid, pepstatin A and SBTI. Alkaline thrombin-like serine protease. Has fibrinolytic and fibrinogenolytic but not plasminogenolytic activity. Cleaves fibrinogen chains Aalpha, Bbeta and gamma chains in that order. Cleaves after Arg and Lys residues. This chain is Alkaline serine protease NJP, found in Hediste japonica (Polychaete worm).